A 453-amino-acid chain; its full sequence is Cytochrome b-c1 complex subunit 2, mitochondrial (453 aa).

The N-terminal 14 residues, 1–14 (MKLLTRAGSFSRFY), are a transit peptide targeting the mitochondrion. An N6-acetyllysine mark is found at Lys-66, Lys-199, and Lys-250.

This sequence belongs to the peptidase M16 family. UQCRC2/QCR2 subfamily. As to quaternary structure, component of the ubiquinol-cytochrome c oxidoreductase (cytochrome b-c1 complex, complex III, CIII), a multisubunit enzyme composed of 11 subunits. The complex is composed of 3 respiratory subunits cytochrome b, cytochrome c1 and Rieske protein UQCRFS1, 2 core protein subunits UQCRC1/QCR1 and UQCRC2/QCR2, and 6 low-molecular weight protein subunits UQCRH/QCR6, UQCRB/QCR7, UQCRQ/QCR8, UQCR10/QCR9, UQCR11/QCR10 and subunit 9, the cleavage product of Rieske protein UQCRFS1. The complex exists as an obligatory dimer and forms supercomplexes (SCs) in the inner mitochondrial membrane with NADH-ubiquinone oxidoreductase (complex I, CI) and cytochrome c oxidase (complex IV, CIV), resulting in different assemblies (supercomplex SCI(1)III(2)IV(1) and megacomplex MCI(2)III(2)IV(2)). Interacts with RAB5IF. Interacts with STMP1.

The protein resides in the mitochondrion inner membrane. Functionally, component of the ubiquinol-cytochrome c oxidoreductase, a multisubunit transmembrane complex that is part of the mitochondrial electron transport chain which drives oxidative phosphorylation. The respiratory chain contains 3 multisubunit complexes succinate dehydrogenase (complex II, CII), ubiquinol-cytochrome c oxidoreductase (cytochrome b-c1 complex, complex III, CIII) and cytochrome c oxidase (complex IV, CIV), that cooperate to transfer electrons derived from NADH and succinate to molecular oxygen, creating an electrochemical gradient over the inner membrane that drives transmembrane transport and the ATP synthase. The cytochrome b-c1 complex catalyzes electron transfer from ubiquinol to cytochrome c, linking this redox reaction to translocation of protons across the mitochondrial inner membrane, with protons being carried across the membrane as hydrogens on the quinol. In the process called Q cycle, 2 protons are consumed from the matrix, 4 protons are released into the intermembrane space and 2 electrons are passed to cytochrome c. The 2 core subunits UQCRC1/QCR1 and UQCRC2/QCR2 are homologous to the 2 mitochondrial-processing peptidase (MPP) subunits beta-MPP and alpha-MPP respectively, and they seem to have preserved their MPP processing properties. May be involved in the in situ processing of UQCRFS1 into the mature Rieske protein and its mitochondrial targeting sequence (MTS)/subunit 9 when incorporated into complex III. This chain is Cytochrome b-c1 complex subunit 2, mitochondrial (UQCRC2), found in Homo sapiens (Human).